Consider the following 387-residue polypeptide: Eukaryotic translation initiation factor 3 subunit M (387 aa).

The PCI domain maps to L181 to H340.

Belongs to the eIF-3 subunit M family. As to quaternary structure, component of the eukaryotic translation initiation factor 3 (eIF-3) complex. The eIF-3 complex interacts with pix.

The protein resides in the cytoplasm. It is found in the golgi apparatus. In terms of biological role, component of the eukaryotic translation initiation factor 3 (eIF-3) complex, which is involved in protein synthesis of a specialized repertoire of mRNAs and, together with other initiation factors, stimulates binding of mRNA and methionyl-tRNAi to the 40S ribosome. The eIF-3 complex specifically targets and initiates translation of a subset of mRNAs involved in cell proliferation. The sequence is that of Eukaryotic translation initiation factor 3 subunit M from Drosophila grimshawi (Hawaiian fruit fly).